Consider the following 70-residue polypeptide: MIIPVRCFTCGKVIGNKWDAYLSLLQIDYTEGDALDALCLKRYCCRRMLLTHVDLIEKLLNYTPLATKSS.

The Zn(2+) site is built by Cys7, Cys10, Cys44, and Cys45.

Belongs to the archaeal Rpo10/eukaryotic RPB10 RNA polymerase subunit family. In terms of assembly, component of the RNA polymerase I (Pol I), RNA polymerase II (Pol II) and RNA polymerase III (Pol III) complexes.

It localises to the nucleus. DNA-dependent RNA polymerase catalyzes the transcription of DNA into RNA using the four ribonucleoside triphosphates as substrates. Common component of RNA polymerases I, II and III which synthesize ribosomal RNA precursors, mRNA precursors and many functional non-coding RNAs, and a small RNAs, such as 5S rRNA and tRNAs, respectively. Pol II is the central component of the basal RNA polymerase II transcription machinery. Pols are composed of mobile elements that move relative to each other. In Pol II, RBP10 is part of the core element with the central large cleft. This chain is DNA-directed RNA polymerases I, II, and III subunit rpabc5 (polr2l), found in Dictyostelium discoideum (Social amoeba).